A 74-amino-acid chain; its full sequence is Large ribosomal subunit protein uL29 (74 aa).

Belongs to the universal ribosomal protein uL29 family.

In Nostoc sp. (strain PCC 7120 / SAG 25.82 / UTEX 2576), this protein is Large ribosomal subunit protein uL29.